Reading from the N-terminus, the 966-residue chain is Catenin alpha-2 (966 aa).

Over residues 924 to 940 (PEKKPLVKREKPEEYQT) the composition is skewed to basic and acidic residues. The tract at residues 924–952 (PEKKPLVKREKPEEYQTRVRRGSQKKHIS) is disordered. Over residues 941–951 (RVRRGSQKKHI) the composition is skewed to basic residues.

This sequence belongs to the vinculin/alpha-catenin family.

The protein resides in the cell membrane. Its subcellular location is the cytoplasm. The protein localises to the cytoskeleton. It is found in the cell junction. It localises to the adherens junction. The protein resides in the cell projection. Its subcellular location is the axon. The protein localises to the nucleus. May function as a linker between cadherin adhesion receptors and the cytoskeleton to regulate cell-cell adhesion and differentiation in the nervous system. This is Catenin alpha-2 (ctnna2) from Xenopus laevis (African clawed frog).